Consider the following 581-residue polypeptide: Polypeptide N-acetylgalactosaminyltransferase 12 (581 aa).

Residues 1 to 19 (MWGRTARRRCPRELRRGRE) lie on the Cytoplasmic side of the membrane. The chain crosses the membrane as a helical; Signal-anchor for type II membrane protein span at residues 20–37 (ALLVLLALLALAGLGSVL). Topologically, residues 38–581 (RAQRGAGAGA…QKWFFKERML (544 aa)) are lumenal. The tract at residues 43–67 (AGAGAAEPGPPRTPRPGRREPVMPR) is disordered. Intrachain disulfides connect cysteine 125–cysteine 358, cysteine 349–cysteine 422, cysteine 458–cysteine 479, cysteine 506–cysteine 521, and cysteine 547–cysteine 566. The interval 135–244 (LPRTSVIIAF…EGWLEPLLQR (110 aa)) is catalytic subdomain A. Positions 176 and 205 each coordinate substrate. The Mn(2+) site is built by aspartate 228 and histidine 230. The interval 304–366 (VIRSPTMAGG…PCSHVGHVFP (63 aa)) is catalytic subdomain B. Tryptophan 335 provides a ligand contact to substrate. Histidine 363 is a Mn(2+) binding site. A substrate-binding site is contributed by tyrosine 371. One can recognise a Ricin B-type lectin domain in the interval 445–577 (FFGMLQNKGL…NSDHQKWFFK (133 aa)).

The protein belongs to the glycosyltransferase 2 family. GalNAc-T subfamily. Mn(2+) is required as a cofactor. In terms of tissue distribution, widely expressed at different levels of expression. Highly expressed in digestive organs such as small intestine, stomach, pancreas and colon. Expressed at intermediate level in testis, thyroid gland and spleen. Weakly expressed in whole brain, cerebral cortex, cerebellum, fetal brain, bone marrow, thymus, leukocytes, heart, skeletal muscle, liver, lung, esophagus, kidney, adrenal gland, mammary gland, uterus, placenta, ovary and prostate.

It is found in the golgi apparatus membrane. The enzyme catalyses L-seryl-[protein] + UDP-N-acetyl-alpha-D-galactosamine = a 3-O-[N-acetyl-alpha-D-galactosaminyl]-L-seryl-[protein] + UDP + H(+). The catalysed reaction is L-threonyl-[protein] + UDP-N-acetyl-alpha-D-galactosamine = a 3-O-[N-acetyl-alpha-D-galactosaminyl]-L-threonyl-[protein] + UDP + H(+). It functions in the pathway protein modification; protein glycosylation. Its function is as follows. Catalyzes the initial reaction in O-linked oligosaccharide biosynthesis, the transfer of an N-acetyl-D-galactosamine residue to a serine or threonine residue on the protein receptor. Has activity toward non-glycosylated peptides such as Muc5AC, Muc1a and EA2, and no detectable activity with Muc2 and Muc7. Displays enzymatic activity toward the Gal-NAc-Muc5AC glycopeptide, but no detectable activity to mono-GalNAc-glycosylated Muc1a, Muc2, Muc7 and EA2. May play an important role in the initial step of mucin-type oligosaccharide biosynthesis in digestive organs. The chain is Polypeptide N-acetylgalactosaminyltransferase 12 (GALNT12) from Homo sapiens (Human).